Reading from the N-terminus, the 528-residue chain is ATP synthase F(1) complex catalytic subunit beta, mitochondrial (528 aa).

Residues 1 to 46 constitute a mitochondrion transit peptide; it reads MLGLVGRVVAASASGALRGLSPSAPLPQAQLLLRAAPAALQPARDY. Ser106 carries an O-linked (GlcNAc) serine glycan. N6-acetyllysine; alternate occurs at positions 124 and 161. 2 positions are modified to N6-succinyllysine; alternate: Lys124 and Lys161. At Lys198 the chain carries N6-acetyllysine. ADP-binding residues include Gly209, Val210, Gly211, Lys212, Thr213, and Val214. Gly209 contributes to the ATP binding site. Phosphate contacts are provided by Gly209, Val210, Gly211, Lys212, and Thr213. Gly211, Lys212, Thr213, and Val214 together coordinate ATP. Residue Thr213 coordinates Mg(2+). Mg(2+) is bound at residue Glu238. Position 239 (Arg239) interacts with ATP. Residues Lys259 and Lys264 each carry the N6-acetyllysine; alternate modification. Residues Lys259 and Lys264 each carry the N6-succinyllysine; alternate modification. At Thr312 the chain carries Phosphothreonine. Ser415 carries the post-translational modification Phosphoserine. Lys426 is modified (N6-acetyllysine). Residue Ser433 is modified to Phosphoserine. Residues Lys480 and Lys485 each carry the N6-acetyllysine modification. At Lys522 the chain carries N6-acetyllysine; alternate. Lys522 carries the post-translational modification N6-succinyllysine; alternate.

The protein belongs to the ATPase alpha/beta chains family. In terms of assembly, homotrimer. Component of the ATP synthase complex composed at least of ATP5F1A/subunit alpha, ATP5F1B/subunit beta, ATP5MC1/subunit c (homooctomer), MT-ATP6/subunit a, MT-ATP8/subunit 8, ATP5ME/subunit e, ATP5MF/subunit f, ATP5MG/subunit g, ATP5MK/subunit k, ATP5MJ/subunit j, ATP5F1C/subunit gamma, ATP5F1D/subunit delta, ATP5F1E/subunit epsilon, ATP5PF/subunit F6, ATP5PB/subunit b, ATP5PD/subunit d, ATP5PO/subunit OSCP. ATP synthase complex consists of a soluble F(1) head domain (subunits alpha(3) and beta(3)) - the catalytic core - and a membrane F(0) domain - the membrane proton channel (subunits c, a, 8, e, f, g, k and j). These two domains are linked by a central stalk (subunits gamma, delta, and epsilon) rotating inside the F1 region and a stationary peripheral stalk (subunits F6, b, d, and OSCP). Interacts with PPIF. Interacts with BCL2L1 isoform BCL-X(L); the interaction mediates the association of BCL2L1 isoform BCL-X(L) with the mitochondrial membrane F(1)F(0) ATP synthase and enhances neurons metabolic efficiency. Interacts with CLN5 and PPT1. Interacts with S100A1; this interaction increases F1-ATPase activity. Interacts with MTLN. Interacts with TTC5/STRAP; the interaction results in decreased mitochondrial ATP production.

It is found in the mitochondrion inner membrane. It carries out the reaction ATP + H2O + 4 H(+)(in) = ADP + phosphate + 5 H(+)(out). Its function is as follows. Catalytic subunit beta, of the mitochondrial membrane ATP synthase complex (F(1)F(0) ATP synthase or Complex V) that produces ATP from ADP in the presence of a proton gradient across the membrane which is generated by electron transport complexes of the respiratory chain. ATP synthase complex consist of a soluble F(1) head domain - the catalytic core - and a membrane F(1) domain - the membrane proton channel. These two domains are linked by a central stalk rotating inside the F(1) region and a stationary peripheral stalk. During catalysis, ATP synthesis in the catalytic domain of F(1) is coupled via a rotary mechanism of the central stalk subunits to proton translocation. In vivo, can only synthesize ATP although its ATP hydrolase activity can be activated artificially in vitro. With the subunit alpha (ATP5F1A), forms the catalytic core in the F(1) domain. This is ATP synthase F(1) complex catalytic subunit beta, mitochondrial from Bos taurus (Bovine).